Reading from the N-terminus, the 579-residue chain is Phosphatidylinositol/phosphatidylcholine transfer protein SFH9 (579 aa).

In terms of domain architecture, CRAL-TRIO spans 145–319 (EYEEVQQYYP…FLGGNCKCAH (175 aa)). Residues 372–419 (DMSSPDGGHVRERESHPEHDKRAQLSNQAEAVGVGRMEQSDSTSPLPN) are disordered. Positions 379-394 (GHVRERESHPEHDKRA) are enriched in basic and acidic residues. The stretch at 512-539 (QEKEDILRDSLDRIKSIEQDLQKTKKAL) forms a coiled coil.

It belongs to the SFH family.

It is found in the golgi apparatus membrane. The protein localises to the cell membrane. Functionally, required for transport of secretory proteins from the Golgi complex. Catalyzes the transfer of phosphatidylinositol and phosphatidylcholine between membranes in vitro. This Arabidopsis thaliana (Mouse-ear cress) protein is Phosphatidylinositol/phosphatidylcholine transfer protein SFH9 (SFH9).